Here is a 328-residue protein sequence, read N- to C-terminus: MQGFVKDFLKPNLVGIEQINATRAKVTLEPLERGFGHTLGNALRRILLSSMPGAAITEVEIDGVQNEYSIKEGVQEEILEILLNLKGLAVKLEGKNEVLVSLTKSGAGPVIAADITHDSDLEIVNPEHVICHLTGNTEISMRIKIELGRGYVPASSRIHSEEDKSANGRLFVDATFSPVERIAYSVESARVEQRTNLDKLVIDMETDGTLEPEEAIRQAAMILAGQLDEFVDERIISAPVEVEEKPEFDPILLRPVNDLELTVRSANCLKAESIYYIGDLVQRTEVELLKMPNLGRKSLTEIKDDLVSRGLYLGMRLENWPPASLIED.

The tract at residues 1–234 (MQGFVKDFLK…GQLDEFVDER (234 aa)) is alpha N-terminal domain (alpha-NTD). Residues 248–328 (FDPILLRPVN…NWPPASLIED (81 aa)) are alpha C-terminal domain (alpha-CTD).

It belongs to the RNA polymerase alpha chain family. In terms of assembly, homodimer. The RNAP catalytic core consists of 2 alpha, 1 beta, 1 beta' and 1 omega subunit. When a sigma factor is associated with the core the holoenzyme is formed, which can initiate transcription.

It catalyses the reaction RNA(n) + a ribonucleoside 5'-triphosphate = RNA(n+1) + diphosphate. Its function is as follows. DNA-dependent RNA polymerase catalyzes the transcription of DNA into RNA using the four ribonucleoside triphosphates as substrates. This Psychromonas ingrahamii (strain DSM 17664 / CCUG 51855 / 37) protein is DNA-directed RNA polymerase subunit alpha 1.